Reading from the N-terminus, the 508-residue chain is Photosystem II CP47 reaction center protein (508 aa).

6 helical membrane passes run 21–36 (SVHIMHTALVSGWAGS), 101–115 (IVFSGLCFLAAIWHW), 140–156 (GIHLFLSGVACFGFGAF), 203–218 (IAAGTLGILAGLFHLS), 237–252 (VLSSSIAAVFFAAFVV), and 457–472 (SFALLFFFGHIWHGAR).

The protein belongs to the PsbB/PsbC family. PsbB subfamily. As to quaternary structure, PSII is composed of 1 copy each of membrane proteins PsbA, PsbB, PsbC, PsbD, PsbE, PsbF, PsbH, PsbI, PsbJ, PsbK, PsbL, PsbM, PsbT, PsbX, PsbY, PsbZ, Psb30/Ycf12, at least 3 peripheral proteins of the oxygen-evolving complex and a large number of cofactors. It forms dimeric complexes. It depends on Binds multiple chlorophylls. PSII binds additional chlorophylls, carotenoids and specific lipids. as a cofactor.

Its subcellular location is the plastid. It is found in the chloroplast thylakoid membrane. Functionally, one of the components of the core complex of photosystem II (PSII). It binds chlorophyll and helps catalyze the primary light-induced photochemical processes of PSII. PSII is a light-driven water:plastoquinone oxidoreductase, using light energy to abstract electrons from H(2)O, generating O(2) and a proton gradient subsequently used for ATP formation. The sequence is that of Photosystem II CP47 reaction center protein from Platanus occidentalis (Sycamore).